The chain runs to 260 residues: Late transcription factor 1 (260 aa).

It belongs to the chordopoxvirinae VLTF-1 family. In terms of assembly, interacts with the late transcription factors VLTF-2 and VLTF-3. Interacts with the late transcription elongation factor VLTF-4. Interacts with itself.

Functionally, associates with RNA polymerase to initiate transcription from late gene promoters. This Homo sapiens (Human) protein is Late transcription factor 1 (OPG093).